The primary structure comprises 64 residues: Large ribosomal subunit protein bL35 (64 aa).

The span at 1 to 14 (MKQKTHKGAAKRIK) shows a compositional bias: basic residues. Residues 1–50 (MKQKTHKGAAKRIKISGSGKLRREQANRRHLLEGKPSKRTRRLKGTEDVA) are disordered. Over residues 21–36 (LRREQANRRHLLEGKP) the composition is skewed to basic and acidic residues.

This sequence belongs to the bacterial ribosomal protein bL35 family.

This Corynebacterium jeikeium (strain K411) protein is Large ribosomal subunit protein bL35.